A 432-amino-acid chain; its full sequence is Adenylosuccinate synthetase (432 aa).

Residues 13 to 19 (GDEGKGK) and 41 to 43 (GHT) contribute to the GTP site. Asp14 (proton acceptor) is an active-site residue. Mg(2+) contacts are provided by Asp14 and Gly41. IMP is bound by residues 14-17 (DEGK), 39-42 (NAGH), Thr130, Arg144, Gln225, Thr240, and Arg304. His42 functions as the Proton donor in the catalytic mechanism. 300 to 306 (AVTGRPR) serves as a coordination point for substrate. GTP contacts are provided by residues Arg306, 332-334 (KLD), and 415-417 (STG).

This sequence belongs to the adenylosuccinate synthetase family. Homodimer. It depends on Mg(2+) as a cofactor.

The protein localises to the cytoplasm. It catalyses the reaction IMP + L-aspartate + GTP = N(6)-(1,2-dicarboxyethyl)-AMP + GDP + phosphate + 2 H(+). The protein operates within purine metabolism; AMP biosynthesis via de novo pathway; AMP from IMP: step 1/2. Functionally, plays an important role in the de novo pathway of purine nucleotide biosynthesis. Catalyzes the first committed step in the biosynthesis of AMP from IMP. In Glaesserella parasuis serovar 5 (strain SH0165) (Haemophilus parasuis), this protein is Adenylosuccinate synthetase.